The primary structure comprises 128 residues: Cytochrome c-type biogenesis protein CcmE (128 aa).

The Cytoplasmic segment spans residues 1 to 8 (MQKIVRNR). A helical; Signal-anchor for type II membrane protein membrane pass occupies residues 9 to 29 (LIKIILCFCSTCLGISIILYN). At 30–128 (LEKNIIFFFP…KHDENYRPPS (99 aa)) the chain is on the periplasmic side. Residues His-120 and Tyr-124 each coordinate heme.

The protein belongs to the CcmE/CycJ family.

The protein resides in the cell inner membrane. Functionally, heme chaperone required for the biogenesis of c-type cytochromes. Transiently binds heme delivered by CcmC and transfers the heme to apo-cytochromes in a process facilitated by CcmF and CcmH. This Rickettsia typhi (strain ATCC VR-144 / Wilmington) protein is Cytochrome c-type biogenesis protein CcmE.